Consider the following 655-residue polypeptide: Chaperone protein DnaK 3 (655 aa).

Thr197 bears the Phosphothreonine; by autocatalysis mark.

Belongs to the heat shock protein 70 family.

In terms of biological role, acts as a chaperone. This is Chaperone protein DnaK 3 from Synechococcus sp. (strain ATCC 27144 / PCC 6301 / SAUG 1402/1) (Anacystis nidulans).